The chain runs to 218 residues: Pyridoxine/pyridoxamine 5'-phosphate oxidase (218 aa).

Substrate-binding positions include 14 to 17 (RREY) and K72. FMN is bound by residues 67–72 (RIVLLK), 82–83 (YT), R88, K89, and Q111. Substrate is bound by residues Y129, R133, and S137. FMN contacts are provided by residues 146–147 (QS) and W191. 197–199 (RLH) is a substrate binding site. R201 lines the FMN pocket.

Belongs to the pyridoxamine 5'-phosphate oxidase family. Homodimer. It depends on FMN as a cofactor.

The enzyme catalyses pyridoxamine 5'-phosphate + O2 + H2O = pyridoxal 5'-phosphate + H2O2 + NH4(+). It carries out the reaction pyridoxine 5'-phosphate + O2 = pyridoxal 5'-phosphate + H2O2. It participates in cofactor metabolism; pyridoxal 5'-phosphate salvage; pyridoxal 5'-phosphate from pyridoxamine 5'-phosphate: step 1/1. Its pathway is cofactor metabolism; pyridoxal 5'-phosphate salvage; pyridoxal 5'-phosphate from pyridoxine 5'-phosphate: step 1/1. In terms of biological role, catalyzes the oxidation of either pyridoxine 5'-phosphate (PNP) or pyridoxamine 5'-phosphate (PMP) into pyridoxal 5'-phosphate (PLP). The polypeptide is Pyridoxine/pyridoxamine 5'-phosphate oxidase (Citrobacter koseri (strain ATCC BAA-895 / CDC 4225-83 / SGSC4696)).